Here is a 130-residue protein sequence, read N- to C-terminus: Small ribosomal subunit protein uS9 (130 aa).

This sequence belongs to the universal ribosomal protein uS9 family.

The sequence is that of Small ribosomal subunit protein uS9 from Verminephrobacter eiseniae (strain EF01-2).